The sequence spans 90 residues: Mitochondrial import inner membrane translocase subunit Tim10 (90 aa).

Positions 29–54 match the Twin CX3C motif motif; the sequence is CHRKCVPPHYKEAELSKGESVCLDRC. Cystine bridges form between Cys-29-Cys-54 and Cys-33-Cys-50.

Belongs to the small Tim family. In terms of assembly, heterohexamer; composed of 3 copies of TIMM9 and 3 copies of TIMM10/TIM10A, named soluble 70 kDa complex. The complex forms a 6-bladed alpha-propeller structure and associates with the TIMM22 component of the TIM22 complex. Interacts with multi-pass transmembrane proteins in transit. Also forms a complex composed of TIMM9, TIMM10/TIM10A and FXC1/TIM10B.

Its subcellular location is the mitochondrion inner membrane. Its function is as follows. Mitochondrial intermembrane chaperone that participates in the import and insertion of multi-pass transmembrane proteins into the mitochondrial inner membrane. May also be required for the transfer of beta-barrel precursors from the TOM complex to the sorting and assembly machinery (SAM complex) of the outer membrane. Acts as a chaperone-like protein that protects the hydrophobic precursors from aggregation and guide them through the mitochondrial intermembrane space. The protein is Mitochondrial import inner membrane translocase subunit Tim10 (TIMM10) of Bos taurus (Bovine).